Reading from the N-terminus, the 274-residue chain is Secreted RxLR effector protein 40 (274 aa).

An N-terminal signal peptide occupies residues 1 to 21 (MRLYTQVVAASLVATLAIVDS). The RxLR-dEER motif lies at 35-53 (RFLRQDNATVARVSEDGER). 3 N-linked (GlcNAc...) asparagine glycosylation sites follow: N41, N74, and N258.

The protein belongs to the RxLR effector family.

The protein resides in the secreted. It localises to the host nucleus. It is found in the host cytoplasm. In terms of biological role, secreted effector that completely suppresses the host cell death induced by cell death-inducing proteins. In Plasmopara viticola (Downy mildew of grapevine), this protein is Secreted RxLR effector protein 40.